A 62-amino-acid chain; its full sequence is Photosystem II reaction center protein Z (62 aa).

Transmembrane regions (helical) follow at residues 8–28 (ALLA…VVFA) and 41–61 (FSGL…NSFV).

It belongs to the PsbZ family. In terms of assembly, PSII is composed of 1 copy each of membrane proteins PsbA, PsbB, PsbC, PsbD, PsbE, PsbF, PsbH, PsbI, PsbJ, PsbK, PsbL, PsbM, PsbT, PsbY, PsbZ, Psb30/Ycf12, at least 3 peripheral proteins of the oxygen-evolving complex and a large number of cofactors. It forms dimeric complexes.

It is found in the plastid. It localises to the chloroplast thylakoid membrane. In terms of biological role, controls the interaction of photosystem II (PSII) cores with the light-harvesting antenna, aiding in the dissipation of excitation energy within PSII. PSII is a light-driven water plastoquinone oxidoreductase, using light energy to abstract electrons from H(2)O, generating a proton gradient subsequently used for ATP formation. This chain is Photosystem II reaction center protein Z, found in Chlamydomonas reinhardtii (Chlamydomonas smithii).